Reading from the N-terminus, the 1284-residue chain is Integrator complex subunit 6 (1284 aa).

The region spanning 3 to 134 (IILFLVDTSS…PSVIIVITDG (132 aa)) is the VWFA domain. 4 disordered regions span residues 653–824 (DVAP…GMSN), 864–895 (ETGE…SPAV), 1053–1086 (TSSG…DDHA), and 1125–1180 (NNSS…PGQS). A compositionally biased stretch (gly residues) spans 690 to 721 (SPGGGSGPGMPGMPGMGGGMSGLMLGAGGSGG). Composition is skewed to low complexity over residues 752-781 (DSRS…SSIS) and 803-824 (NSNS…GMSN). A compositionally biased stretch (polar residues) spans 879-890 (GASSANEPSSIG). Low complexity-rich tracts occupy residues 1053–1074 (TSSG…NGST) and 1125–1141 (NNSS…LSNN). Polar residues predominate over residues 1159–1171 (INSSCGSSPTHNN).

The protein belongs to the Integrator subunit 6 family. Belongs to the multiprotein complex Integrator, at least composed of IntS1, IntS2, IntS3, IntS4, omd/IntS5, IntS6, defl/IntS7, IntS8, IntS9, IntS10, IntS11, IntS12, asun/IntS13, IntS14 and IntS15. The core complex associates with protein phosphatase 2A subunits mts/PP2A and Pp2A-29B, to form the Integrator-PP2A (INTAC) complex.

The protein resides in the nucleus. Functionally, component of the integrator complex, a multiprotein complex that terminates RNA polymerase II (Pol II) transcription in the promoter-proximal region of genes. The integrator complex provides a quality checkpoint during transcription elongation by driving premature transcription termination of transcripts that are unfavorably configured for transcriptional elongation: the complex terminates transcription by (1) catalyzing dephosphorylation of the C-terminal domain (CTD) of Pol II subunit Polr2A/Rbp1 and Spt5, and (2) degrading the exiting nascent RNA transcript via endonuclease activity. The integrator complex is also involved in the 3'-end processing of the U7 snRNA, and also the spliceosomal snRNAs U1, U2, U4 and U5. Within the integrator complex, IntS6 acts as a substrate adapter for protein phosphatase 2A (PP2A). This chain is Integrator complex subunit 6, found in Drosophila melanogaster (Fruit fly).